Consider the following 748-residue polypeptide: Acyl-coenzyme A oxidase (748 aa).

It belongs to the acyl-CoA oxidase family. As to quaternary structure, homooctamer. Requires FAD as cofactor.

It is found in the peroxisome. The catalysed reaction is a 2,3-saturated acyl-CoA + O2 = a (2E)-enoyl-CoA + H2O2. It participates in lipid metabolism; peroxisomal fatty acid beta-oxidation. The protein is Acyl-coenzyme A oxidase (POX1) of Saccharomyces cerevisiae (strain ATCC 204508 / S288c) (Baker's yeast).